The sequence spans 387 residues: Succinate--CoA ligase [ADP-forming] subunit beta (387 aa).

An ATP-grasp domain is found at 9 to 245 (KDLLESYGLK…KSQENAKELK (237 aa)). ATP-binding positions include K46, 53–55 (GRG), E100, Y103, and E108. Positions 200 and 214 each coordinate Mg(2+). Substrate contacts are provided by residues N265 and 322–324 (GIV).

It belongs to the succinate/malate CoA ligase beta subunit family. In terms of assembly, heterotetramer of two alpha and two beta subunits. Requires Mg(2+) as cofactor.

It carries out the reaction succinate + ATP + CoA = succinyl-CoA + ADP + phosphate. The catalysed reaction is GTP + succinate + CoA = succinyl-CoA + GDP + phosphate. It participates in carbohydrate metabolism; tricarboxylic acid cycle; succinate from succinyl-CoA (ligase route): step 1/1. Succinyl-CoA synthetase functions in the citric acid cycle (TCA), coupling the hydrolysis of succinyl-CoA to the synthesis of either ATP or GTP and thus represents the only step of substrate-level phosphorylation in the TCA. The beta subunit provides nucleotide specificity of the enzyme and binds the substrate succinate, while the binding sites for coenzyme A and phosphate are found in the alpha subunit. In Francisella tularensis subsp. mediasiatica (strain FSC147), this protein is Succinate--CoA ligase [ADP-forming] subunit beta.